The chain runs to 180 residues: O-acetyl-ADP-ribose deacetylase (180 aa).

Positions 1-175 constitute a Macro domain; that stretch reads MKPQIDVIHG…LYQRLLTQRG (175 aa). Residues 11–12, asparagine 25, 33–35, and 122–126 contribute to the substrate site; these read DI, GVD, and STGVY. The Proton acceptor role is filled by aspartate 35.

Belongs to the MacroD-type family. YmdB subfamily. As to quaternary structure, homodimer. Interacts with RNase III.

The catalysed reaction is 3''-O-acetyl-ADP-D-ribose + H2O = ADP-D-ribose + acetate + H(+). It catalyses the reaction 2''-O-acetyl-ADP-D-ribose + H2O = ADP-D-ribose + acetate + H(+). Functionally, deacetylates O-acetyl-ADP ribose to yield ADP-ribose and free acetate. Down-regulates ribonuclease 3 (RNase III) activity. Acts by interacting directly with the region of the ribonuclease that is required for dimerization/activation. The sequence is that of O-acetyl-ADP-ribose deacetylase from Enterobacter cloacae subsp. cloacae (strain ATCC 13047 / DSM 30054 / NBRC 13535 / NCTC 10005 / WDCM 00083 / NCDC 279-56).